Reading from the N-terminus, the 208-residue chain is Octanoyltransferase (208 aa).

Residues 29-208 (KTQDELVWLL…KEFNKVFCNC (180 aa)) form the BPL/LPL catalytic domain. Substrate contacts are provided by residues 68–75 (RGGKYTYH), 140–142 (AFG), and 153–155 (GVS). Catalysis depends on cysteine 171, which acts as the Acyl-thioester intermediate.

The protein belongs to the LipB family.

It is found in the cytoplasm. The catalysed reaction is octanoyl-[ACP] + L-lysyl-[protein] = N(6)-octanoyl-L-lysyl-[protein] + holo-[ACP] + H(+). Its pathway is protein modification; protein lipoylation via endogenous pathway; protein N(6)-(lipoyl)lysine from octanoyl-[acyl-carrier-protein]: step 1/2. In terms of biological role, catalyzes the transfer of endogenously produced octanoic acid from octanoyl-acyl-carrier-protein onto the lipoyl domains of lipoate-dependent enzymes. Lipoyl-ACP can also act as a substrate although octanoyl-ACP is likely to be the physiological substrate. This Ehrlichia ruminantium (strain Gardel) protein is Octanoyltransferase.